Consider the following 546-residue polypeptide: Glutathione reductase (546 aa).

The N-terminal 45 residues, 2–46, are a transit peptide targeting the apicoplast; sequence YKHRYFHFFFFFFFFLVSTKIIRSFTFLNNNTNLSNPVYFKKKAN. Residues Ser58 and Gly59 each contribute to the FAD site. Ser58 is a glutathione binding site. Arg65 contributes to the glutathione binding site. FAD-binding residues include Glu78, Thr85, Cys86, and Lys94. Cys86 and Cys91 form a disulfide bridge. Tyr141 provides a ligand contact to glutathione. Residue Ala157 participates in FAD binding. Residues Ile233, Glu236, Arg253, Arg259, and Gly318 each coordinate NADP(+). Asp358 and Thr400 together coordinate FAD. A glutathione-binding site is contributed by Arg408. Val430 serves as a coordination point for NADP(+). Residue His531 coordinates FAD. Residue His531 is the Proton acceptor of the active site.

Belongs to the class-I pyridine nucleotide-disulfide oxidoreductase family. In terms of assembly, homodimer. It depends on FAD as a cofactor.

It localises to the cytoplasm. Its subcellular location is the plastid. The protein localises to the apicoplast. The catalysed reaction is 2 glutathione + NADP(+) = glutathione disulfide + NADPH + H(+). In terms of biological role, catalyzes the reduction of glutathione disulfide (GSSG) to reduced glutathione (GSH). Constitutes the major mechanism to maintain a high GSH:GSSG ratio in the cytosol. The chain is Glutathione reductase from Plasmodium falciparum (isolate 3D7).